The primary structure comprises 258 residues: Synaptosomal-associated protein 29 (258 aa).

Residues 1–41 form a disordered region; the sequence is MSAYPKSYNPFDDDGEDEGARPAPWRDARDLPDGPDAPADR. The segment covering 18–32 has biased composition (basic and acidic residues); that stretch reads EGARPAPWRDARDLP. Positions 76 to 107 form a coiled coil; sequence ASSEELARQRGVLERTEKMVDKMDQDLKISQK. Serine 77, serine 78, and serine 114 each carry phosphoserine. Residues threonine 130 and threonine 137 each carry the phosphothreonine modification. Residues 150–191 form a disordered region; it reads ISTSKEQEAKYQASHPNLRKLDDTDPVPRGAGSAMSTDAYPK. Phosphoserine is present on residues serine 163, serine 182, serine 185, serine 204, and serine 210. The 63-residue stretch at 196-258 folds into the t-SNARE coiled-coil homology domain; it reads RAYHQKIDSN…KSTERKVRQL (63 aa).

The protein belongs to the SNAP-25 family. In terms of assembly, forms a SNARE complex, composed of VAMP8, SNAP29 and STX17, involved in fusion of autophagosome with lysosome. Interacts with multiple syntaxins including STX6. Interacts with EIPR1. Interacts with STX17; this interaction is increased in the absence of TMEM39A. (Microbial infection) Interacts with Hantaan hantavirus nucleoprotein; this interaction prevents the breakdown of the viral glycoprotein N by virus-triggered autophagy. As to quaternary structure, (Microbial infection) The interaction with STX17 is decreased in presence of SARS coronavirus-2/SARS-CoV-2 ORF3A protein. As to expression, found in brain, heart, kidney, liver, lung, placenta, skeletal muscle, spleen and pancreas.

The protein localises to the cytoplasm. Its subcellular location is the golgi apparatus membrane. It localises to the cytoplasmic vesicle. It is found in the autophagosome membrane. The protein resides in the cell projection. The protein localises to the cilium membrane. Functionally, SNAREs, soluble N-ethylmaleimide-sensitive factor-attachment protein receptors, are essential proteins for fusion of cellular membranes. SNAREs localized on opposing membranes assemble to form a trans-SNARE complex, an extended, parallel four alpha-helical bundle that drives membrane fusion. SNAP29 is a SNARE involved in autophagy through the direct control of autophagosome membrane fusion with the lysososome membrane. Also plays a role in ciliogenesis by regulating membrane fusions. This is Synaptosomal-associated protein 29 from Homo sapiens (Human).